Here is a 918-residue protein sequence, read N- to C-terminus: DNA ligase 1 (918 aa).

Residues 1-15 are compositionally biased toward polar residues; it reads MQRSIMSFFQPTTTE. The segment at 1–271 is disordered; the sequence is MQRSIMSFFQ…DPTNYNPSKS (271 aa). A compositionally biased stretch (basic and acidic residues) spans 16-54; that stretch reads GKAKKPEKEIPSSIREKEPPPKVALKERNRAVPESDSPV. Phosphoserine is present on residues Ser-50, Ser-52, Ser-66, and Ser-67. Thr-78 is modified (phosphothreonine). Positions 81–92 are enriched in low complexity; the sequence is VQKPVSDSKQSS. Positions 100-114 are enriched in polar residues; it reads PENSPVFNCSPSMDI. Over residues 120–130 the composition is skewed to basic residues; sequence PKRRTARKQLP. An N6-acetyllysine modification is found at Lys-145. Thr-195 is modified (phosphothreonine). N6-acetyllysine is present on Lys-227. A phosphoserine mark is found at Ser-230 and Ser-231. Thr-234 carries the post-translational modification Phosphothreonine. Basic and acidic residues predominate over residues 240-259; sequence VKTEVKQEESDTPRKEETKG. Residue Glu-566 participates in ATP binding. Lys-568 acts as the N6-AMP-lysine intermediate in catalysis. ATP contacts are provided by Arg-573 and Glu-621. Glu-621 contributes to the Mg(2+) binding site. The segment at 642-644 is interaction with target DNA; the sequence is KRK. Residue Glu-720 coordinates Mg(2+). ATP-binding residues include Lys-725 and Lys-744. Position 798 is a phosphothreonine (Thr-798). Residues Ser-801, Ser-908, Ser-909, and Ser-913 each carry the phosphoserine modification. The interval 881–918 is disordered; the sequence is DKQPEQATTSDQVASLYRKQSQIQNQQSSDLDSDVEDY. The span at 885–910 shows a compositional bias: polar residues; it reads EQATTSDQVASLYRKQSQIQNQQSSD.

The protein belongs to the ATP-dependent DNA ligase family. As to quaternary structure, interacts with PCNA. Interacts with POLB. Mg(2+) is required as a cofactor.

Its subcellular location is the nucleus. The catalysed reaction is ATP + (deoxyribonucleotide)n-3'-hydroxyl + 5'-phospho-(deoxyribonucleotide)m = (deoxyribonucleotide)n+m + AMP + diphosphate.. DNA ligase that seals nicks in double-stranded during DNA repair. Also involved in DNA replication and DNA recombination. This is DNA ligase 1 (Lig1) from Rattus norvegicus (Rat).